A 178-amino-acid chain; its full sequence is MSAKVVEILSSEEIRRTLTRLASQIVERTRDLSQLVLLGIYTRGALLAELLARQIETLEGVAVSVGALDITFYRDDLDTIGLRTPTKSEIPFDLTGKTVVLVDDVIFKGRTIRAALNAVNDYGRPEVIRLAVLVDRGHRELPIHPDFIGKKLPTAKEEVVKVYLQNYDGRDAVELIGD.

Residues 99 to 111 (VVLVDDVIFKGRT) carry the PRPP-binding motif.

It belongs to the purine/pyrimidine phosphoribosyltransferase family. PyrR subfamily.

The enzyme catalyses UMP + diphosphate = 5-phospho-alpha-D-ribose 1-diphosphate + uracil. Regulates the transcription of the pyrimidine nucleotide (pyr) operon in response to exogenous pyrimidines. In terms of biological role, also displays a weak uracil phosphoribosyltransferase activity which is not physiologically significant. This is Bifunctional protein PyrR from Nostoc punctiforme (strain ATCC 29133 / PCC 73102).